The sequence spans 265 residues: Hydroxyethylthiazole kinase (265 aa).

Met50 contacts substrate. 2 residues coordinate ATP: Arg125 and Thr171. Gly198 is a substrate binding site.

This sequence belongs to the Thz kinase family. Mg(2+) is required as a cofactor.

The enzyme catalyses 5-(2-hydroxyethyl)-4-methylthiazole + ATP = 4-methyl-5-(2-phosphooxyethyl)-thiazole + ADP + H(+). It functions in the pathway cofactor biosynthesis; thiamine diphosphate biosynthesis; 4-methyl-5-(2-phosphoethyl)-thiazole from 5-(2-hydroxyethyl)-4-methylthiazole: step 1/1. Functionally, catalyzes the phosphorylation of the hydroxyl group of 4-methyl-5-beta-hydroxyethylthiazole (THZ). The polypeptide is Hydroxyethylthiazole kinase (Salmonella agona (strain SL483)).